The following is a 90-amino-acid chain: Probable Fe(2+)-trafficking protein (90 aa).

This sequence belongs to the Fe(2+)-trafficking protein family.

Could be a mediator in iron transactions between iron acquisition and iron-requiring processes, such as synthesis and/or repair of Fe-S clusters in biosynthetic enzymes. This Pseudomonas entomophila (strain L48) protein is Probable Fe(2+)-trafficking protein.